We begin with the raw amino-acid sequence, 172 residues long: MISLDKDENEIEHHNEENSLVEQETAPVGQESRQLSASAVKSLSDIAKWGKISGILLIIMGSLVTLSVLMTVIGAIPGVLLIISGVFLMRSAKAAAEAEGNLTGSAGESMLENYGTFIKMQLFYAASSIVTVLIGIIVAIFVLVVIGIAAFENTPSYDDPDSYYYEDDPVFE.

The span at 1 to 17 shows a compositional bias: basic and acidic residues; the sequence is MISLDKDENEIEHHNEE. Residues 1–27 are disordered; it reads MISLDKDENEIEHHNEENSLVEQETAP. The helical transmembrane segment at 129-151 threads the bilayer; it reads IVTVLIGIIVAIFVLVVIGIAAF.

The protein localises to the membrane. This is an uncharacterized protein from Bacillus subtilis (strain 168).